The sequence spans 61 residues: Small ribosomal subunit protein uS14 (61 aa).

Zn(2+)-binding residues include Cys-24, Cys-27, Cys-40, and Cys-43.

The protein belongs to the universal ribosomal protein uS14 family. Zinc-binding uS14 subfamily. As to quaternary structure, part of the 30S ribosomal subunit. Contacts proteins S3 and S10. The cofactor is Zn(2+).

In terms of biological role, binds 16S rRNA, required for the assembly of 30S particles and may also be responsible for determining the conformation of the 16S rRNA at the A site. In Desulfosudis oleivorans (strain DSM 6200 / JCM 39069 / Hxd3) (Desulfococcus oleovorans), this protein is Small ribosomal subunit protein uS14.